Here is a 509-residue protein sequence, read N- to C-terminus: MNEKQRIESGQVNPSDKKSEKDYSKYFEAVYVPPSLKDAKKRGKEEVKYHNDFKISEQFRGMGEGRKFYIRTYGCQMNEHDTEVMAGIFMALGYEPTDSTEDANVILLNTCAIRENAENKVFGEIGHLKALKKDNPDLILGVCGCMSQEESVVNRILKKHPFVDLIFGTHNIHRLPELLSEAYLSKEMVIEVWSKEGDVIENLPKVRTGKIKGWVNIMYGCDKFCTYCIVPYTRGKERSRRPEDIIQEVRRLAAEGYKEITLLGQNVNAYGKDFEDMEYGLGHLMDELRKIDIPRIRFTTSHPRDFDDHLIEVLAKGGNLLDHIHLPVQSGSSDVLKLMARKYDRERYLELVAKIKKAMPNASLTTDIIVGFPNETDEQFEETLSLYREVEFDSAYTFIYSPREGTPAAKMKDNVPMRVKKERLQRLNEVVNEISAKKMKEYEGQVVEVLVEGESKNNPDILAGYTRKNKLVNFKGPKEAIGQLVNVKIHQAKTWSLDGEMVGEAIEVK.

The segment at 1–21 is disordered; the sequence is MNEKQRIESGQVNPSDKKSEK. Residues 66-184 enclose the MTTase N-terminal domain; sequence RKFYIRTYGC…LPELLSEAYL (119 aa). [4Fe-4S] cluster-binding residues include C75, C111, C145, C221, C225, and C228. Residues 207–437 enclose the Radical SAM core domain; that stretch reads RTGKIKGWVN…NEVVNEISAK (231 aa). A TRAM domain is found at 440–503; that stretch reads KEYEGQVVEV…TWSLDGEMVG (64 aa).

It belongs to the methylthiotransferase family. MiaB subfamily. In terms of assembly, monomer. Requires [4Fe-4S] cluster as cofactor.

The protein resides in the cytoplasm. The enzyme catalyses N(6)-dimethylallyladenosine(37) in tRNA + (sulfur carrier)-SH + AH2 + 2 S-adenosyl-L-methionine = 2-methylsulfanyl-N(6)-dimethylallyladenosine(37) in tRNA + (sulfur carrier)-H + 5'-deoxyadenosine + L-methionine + A + S-adenosyl-L-homocysteine + 2 H(+). Its function is as follows. Catalyzes the methylthiolation of N6-(dimethylallyl)adenosine (i(6)A), leading to the formation of 2-methylthio-N6-(dimethylallyl)adenosine (ms(2)i(6)A) at position 37 in tRNAs that read codons beginning with uridine. This Bacillus licheniformis (strain ATCC 14580 / DSM 13 / JCM 2505 / CCUG 7422 / NBRC 12200 / NCIMB 9375 / NCTC 10341 / NRRL NRS-1264 / Gibson 46) protein is tRNA-2-methylthio-N(6)-dimethylallyladenosine synthase.